We begin with the raw amino-acid sequence, 96 residues long: Co-chaperonin GroES 2 (96 aa).

It belongs to the GroES chaperonin family. Heptamer of 7 subunits arranged in a ring. Interacts with the chaperonin GroEL.

The protein resides in the cytoplasm. Together with the chaperonin GroEL, plays an essential role in assisting protein folding. The GroEL-GroES system forms a nano-cage that allows encapsulation of the non-native substrate proteins and provides a physical environment optimized to promote and accelerate protein folding. GroES binds to the apical surface of the GroEL ring, thereby capping the opening of the GroEL channel. This is Co-chaperonin GroES 2 from Vibrio cholerae serotype O1 (strain ATCC 39315 / El Tor Inaba N16961).